Here is a 101-residue protein sequence, read N- to C-terminus: Small ribosomal subunit protein uS14 (101 aa).

Residues 32-67 (SDAKRSDEEREAARLGLQKLPRNANPTRQRNRCEIT) are disordered. Positions 33–44 (DAKRSDEEREAA) are enriched in basic and acidic residues.

The protein belongs to the universal ribosomal protein uS14 family. In terms of assembly, part of the 30S ribosomal subunit. Contacts proteins S3 and S10.

Its function is as follows. Binds 16S rRNA, required for the assembly of 30S particles and may also be responsible for determining the conformation of the 16S rRNA at the A site. The protein is Small ribosomal subunit protein uS14 of Paracidovorax citrulli (strain AAC00-1) (Acidovorax citrulli).